We begin with the raw amino-acid sequence, 2248 residues long: MMDSENKPENDEDEKINKEAQDLTKLSSHNEDGGPVSDVIASFPENSMGKRGFSESSNSDSVVIGEDRNKHASKRRKLDEAEPLKSGKQGICRLETSESSVTEGGIALDETGKETFLSDCTVGGTCLPNALSPSCNFSTIDVVSLKTDTEKTSAQEMVSLDLERESPFPPKEISVSCTIGNVDTVLKCSICGHLFSSCSDLEKHAESHMQQPKEHTCCHCSHKAESSSALHMHIKQAHGPQKVFSCDLCGFQCSEENLLNAHYLGKTHLRRQNLAARGGFVQILTKQPFPKKSRTMATKNVHSKPRTSKSIAKNSDSKGLRNVGSTFKDFRGSISKQSGSSSELLVEMMPSRNTLSQEVEIVEEHVTSLGLAQNPENQSRKLDTLVTSEGLLEKLESTKNTLQAAHGNSVTSRPRPERNILVLGNSFRRRSSTFTLKGQAKKRFNLLGIKRGTSETQRMYMKHLRTQMKTHDAESVLKHLEACSSVQRVCVTTSETQEAEQGQGSARPPDSGLHSLTVKPASGSQTLCACTDCGQVATNRTDLEIHVKRCHAREMKFYCRTCDFSSMSRRDLDEHLHSNQHQQTASVLSCQCCSFISLDEINLRDHMKEKHNMHFLCTPCNLFFLSEKDVEEHKATEKHINSLVQPKTLQSSNSDLVLQTLPLSTLESENAKESMDDSGKASQEEPLKSRVSHGNEVRHSSKPQFQCKKCFYKTRSSTVLTRHIKLRHGQDYHFLCKACNLYSLSKEGMEKHIKRSKHLENAKKNNIGLSFEECIERVCIGANDKKEEFDVSGNGRIEGHIGVQLQEHSYLEKGMLASEELSQSGGSTKDDELASTTTPKRGRPKGNISRTCSHCGLLASSITNLTVHIRRKHSHQYSYLCKVCKYYTVTKGDMERHCATKKHKGRVEIEASGKHSSDIIVGPEGGSLEAGKKNAGSAVTMSDEHANKPAESPTSVLEKPDRGNSIEAEVENVFHSLDGEVNSHLLDKKEQISSEPEDFAQPGDVYSQRDVTGTGENKCLHCEFSAHSSASLELHVKRKHTKEFEFYCMACDYYAVTRREMTRHAATEKHKMKRQSYLNSANVEAGSADMSKNIIMPEEEHQQNSEEFQIISGQPSDTLKSRNAADCSILNENTNLDMSKVLCAADSVEVETEEESNFNEDHSFCETFQQAPVKDKVRKPEEMMSLTMSSNYGSPSRFQNENSGSSALNCETAKKNHEISNDAGELRVHCEGEGGNAGDGGGVVPHRHLCPVTLDGERSAESPVLVVTRITREQGNLESGGQNRVARGHGLEDLKGVQEDPVLGNKEILMNSQHETEFILEEDGPASDSTVESSDVYETIISIDDKGQAMYSFGRFDSSIIRIKNPEDGELIDQSEEGLIATGVRISELPLKDCAQGVKKKKSEGSSIGESTRIRCDDCGFLADGLSGLNVHIAMKHPTKEKHFHCLLCGKSFYTESNLHQHLASAGHMRNEQASVEELPEGGATFKCVKCTEPFDSEQNLFLHIKGQHEELLREVNKYIVEDTEQINREREENQGNVCKYCGKMCRSSNSMAFLAHIRTHTGSKPFKCKICHFATAQLGDARNHVKRHLGMREYKCHVCGVAFVMKKHLNTHLLGKHGVGTPKERKFTCHLCDRSFTEKWALNNHMKLHTGEKPFKCTWPTCHYSFLTASAMKDHYRTHTGEKSFLCDLCGFAGGTRHALTKHRRQHTGEKPFKCDECNFASTTQSHLTRHKRVHTGEKPYRCPWCDYRSNCAENIRKHILHTGKHEGVKMYNCPKCDYGTNVPVEFRNHLKEQHPDIENPDLAYLHAGIVSKSYECRLKGQGATFVETDSPFTAAALAEEPLVKEKPLRSSRRPAPPPEQVQQVIIFQGYDGEFALDPSVEETAAATLQTLAMAGQVARVVHITEDGQVIATSQSGAHVGSVVPGPILPEQLADGATQVVVVGGSMEGHGMDESLSPGGAVIQQVTKQEILNLSEAGVAPPEASSALDALLCAVTELGEVEGRAGLEEQGRPGAKDVLIQLPGQEVSHVAADPEAPEIQMFPQAQESPAAVEVLTQVVHPSAAMASQERAQVAFKKMVQGVLQFAVCDTAAAGQLVKDGVTQVVVSEEGAVHMVAGEGAQIIMQEAQGEHMDLVESDGEISQIIVTEELVQAMVQESSGGFSEGTTHYILTELPPGVQDEPGLYSHTVLETADSQELLQAGATLGTEAGAPSRAEQLASVVIYTQEGSSAAAAIQSQRESSELQEA.

Residues 1–32 (MMDSENKPENDEDEKINKEAQDLTKLSSHNED) are compositionally biased toward basic and acidic residues. The interval 1–84 (MMDSENKPEN…RRKLDEAEPL (84 aa)) is disordered. 3 C2H2-type zinc fingers span residues 186–208 (LKCS…AESH), 215–238 (HTCC…KQAH), and 244–268 (FSCD…GKTH). 2 disordered regions span residues 291-322 (KKSR…GLRN) and 494-515 (SETQ…GLHS). Positions 494 to 504 (SETQEAEQGQG) are enriched in polar residues. 3 consecutive C2H2-type zinc fingers follow at residues 528–551 (CACT…KRCH), 557–581 (FYCR…SNQH), and 615–639 (FLCT…TEKH). Positions 667-700 (ESENAKESMDDSGKASQEEPLKSRVSHGNEVRHS) are disordered. Residues 669-699 (ENAKESMDDSGKASQEEPLKSRVSHGNEVRH) show a composition bias toward basic and acidic residues. The C2H2-type 7 zinc-finger motif lies at 705-728 (FQCKKCFYKTRSSTVLTRHIKLRH). The tract at residues 821-847 (LSQSGGSTKDDELASTTTPKRGRPKGN) is disordered. C2H2-type zinc fingers lie at residues 850–873 (RTCS…RRKH) and 879–903 (YLCK…TKKH). A disordered region spans residues 910–962 (EASGKHSSDIIVGPEGGSLEAGKKNAGSAVTMSDEHANKPAESPTSVLEKPDR). 2 consecutive C2H2-type zinc fingers follow at residues 1017 to 1040 (NKCL…KRKH) and 1046 to 1070 (FYCM…TEKH). Serine 1262 carries the phosphoserine modification. 2 C2H2-type zinc fingers span residues 1444 to 1468 (FHCL…SAGH) and 1486 to 1509 (FKCV…KGQH). The C2H2-type 14; degenerate zinc finger occupies 1537-1561 (NVCKYCGKMCRSSNSMAFLAHIRTH). 8 consecutive C2H2-type zinc fingers follow at residues 1567–1589 (FKCK…VKRH), 1595–1618 (YKCH…LGKH), 1628–1650 (FTCH…MKLH), 1656–1680 (FKCT…YRTH), 1686–1708 (FLCD…RRQH), 1714–1736 (FKCD…KRVH), 1742–1767 (YRCP…TGKH), and 1773–1796 (YNCP…KEQH).

It localises to the nucleus. Functionally, may be involved in transcriptional regulation. The sequence is that of Zinc finger protein 407 (ZNF407) from Homo sapiens (Human).